The primary structure comprises 279 residues: Pantothenate synthetase (279 aa).

26 to 33 serves as a coordination point for ATP; the sequence is MGNLHEGH. His33 functions as the Proton donor in the catalytic mechanism. Residue Gln57 coordinates (R)-pantoate. Residue Gln57 coordinates beta-alanine. 144 to 147 lines the ATP pocket; it reads GKKD. Residue Gln150 participates in (R)-pantoate binding. ATP-binding positions include Val173 and 181-184; that span reads LSSR.

Belongs to the pantothenate synthetase family. Homodimer.

The protein localises to the cytoplasm. The catalysed reaction is (R)-pantoate + beta-alanine + ATP = (R)-pantothenate + AMP + diphosphate + H(+). It participates in cofactor biosynthesis; (R)-pantothenate biosynthesis; (R)-pantothenate from (R)-pantoate and beta-alanine: step 1/1. Catalyzes the condensation of pantoate with beta-alanine in an ATP-dependent reaction via a pantoyl-adenylate intermediate. This is Pantothenate synthetase from Burkholderia lata (strain ATCC 17760 / DSM 23089 / LMG 22485 / NCIMB 9086 / R18194 / 383).